Here is a 123-residue protein sequence, read N- to C-terminus: Ribosome-binding factor A (123 aa).

The protein belongs to the RbfA family. As to quaternary structure, monomer. Binds 30S ribosomal subunits, but not 50S ribosomal subunits or 70S ribosomes.

The protein localises to the cytoplasm. Functionally, one of several proteins that assist in the late maturation steps of the functional core of the 30S ribosomal subunit. Associates with free 30S ribosomal subunits (but not with 30S subunits that are part of 70S ribosomes or polysomes). Required for efficient processing of 16S rRNA. May interact with the 5'-terminal helix region of 16S rRNA. This is Ribosome-binding factor A from Chlamydia trachomatis serovar L2 (strain ATCC VR-902B / DSM 19102 / 434/Bu).